The sequence spans 904 residues: Alanine--tRNA ligase (904 aa).

The Zn(2+) site is built by His-584, His-588, Cys-687, and His-691.

Belongs to the class-II aminoacyl-tRNA synthetase family. Requires Zn(2+) as cofactor.

It is found in the cytoplasm. The enzyme catalyses tRNA(Ala) + L-alanine + ATP = L-alanyl-tRNA(Ala) + AMP + diphosphate. Catalyzes the attachment of alanine to tRNA(Ala) in a two-step reaction: alanine is first activated by ATP to form Ala-AMP and then transferred to the acceptor end of tRNA(Ala). Also edits incorrectly charged Ser-tRNA(Ala) and Gly-tRNA(Ala) via its editing domain. This Mycobacterium tuberculosis (strain ATCC 25177 / H37Ra) protein is Alanine--tRNA ligase.